Reading from the N-terminus, the 301-residue chain is Homeobox protein knotted-1-like 1 (301 aa).

Residues 141–170 (CSGATSPPATTATHSDEMVGSSDEDQCSGE) are disordered. Residues 144-153 (ATSPPATTAT) are compositionally biased toward low complexity. In terms of domain architecture, ELK spans 188–208 (ELKEMLLKKYSGCLSRLRSEF). A DNA-binding region (homeobox; TALE-type) is located at residues 209 to 272 (LKKRKKGKLP…NQRKRHWKPS (64 aa)).

Belongs to the TALE/KNOX homeobox family.

It is found in the nucleus. In terms of biological role, probable transcription factor that may be involved in shoot formation during early embryogenesis. The polypeptide is Homeobox protein knotted-1-like 1 (OSH6) (Oryza sativa subsp. japonica (Rice)).